The following is a 77-amino-acid chain: MANIKSAIKRAELNVKANEKNSAQKSAMRTAIKAFEANPTEELFRAASSSIDKAESKGLIHANKASRDKARLAAKLG.

Belongs to the bacterial ribosomal protein bS20 family.

In terms of biological role, binds directly to 16S ribosomal RNA. The chain is Small ribosomal subunit protein bS20 from Streptococcus uberis (strain ATCC BAA-854 / 0140J).